A 286-amino-acid polypeptide reads, in one-letter code: Polygalacturonan/rhamnogalacturonan transport system permease protein YtcP (286 aa).

The next 6 helical transmembrane spans lie at 9–29, 69–89, 106–126, 131–151, 176–196, and 251–271; these read LIYG…IHVI, LLVS…LSSL, MFLV…FLVV, LLDS…NLII, GIFF…ISLF, and TIKM…YPFI. The ABC transmembrane type-1 domain occupies 69–271; it reads LLVSVFVTVI…IPVLLVYPFI (203 aa).

The protein belongs to the binding-protein-dependent transport system permease family. CysTW subfamily. As to quaternary structure, the complex is probably composed of two ATP-binding proteins (MsmX), two transmembrane proteins (YtcP and YteP) and a solute-binding protein (YtcQ).

The protein localises to the cell membrane. Its function is as follows. Involved in pectin degradation. Part of the ABC transporter complex YtcQP-YteP involved in the uptake of polygalacturonan and rhamnogalacturonan type I. Responsible for the translocation of the substrate across the membrane. The protein is Polygalacturonan/rhamnogalacturonan transport system permease protein YtcP (ytcP) of Bacillus subtilis (strain 168).